Consider the following 328-residue polypeptide: Oligopeptide transport ATP-binding protein AppD (328 aa).

The 252-residue stretch at L5 to L256 folds into the ABC transporter domain. Residue G41–S48 participates in ATP binding.

Belongs to the ABC transporter superfamily.

Its subcellular location is the cell membrane. Its function is as follows. This protein is a component of an oligopeptide permease, a binding protein-dependent transport system. This APP system can completely substitute for the OPP system in both sporulation and genetic competence, though, unlike OPP, is incapable of transporting tripeptides. Probably responsible for energy coupling to the transport system. This Bacillus subtilis (strain 168) protein is Oligopeptide transport ATP-binding protein AppD (appD).